A 375-amino-acid polypeptide reads, in one-letter code: MTTTSVDSWLCSSHGMHFITNYSDQASQNFSGVPNVTSCPMDEKLLSTVLTTFYSVIFLVGLVGNIIALYVFLGIHRKRNSIQIYLLNVAVADLLLIFCLPFRIMYHINQNKWTLGVILCKVVGTLFYMNMYISIILLGFISLDRYIKINRSIQQRRAITTKQSIYVCCIVWTVALAGFLTMIILTLKKGGHNSTMCFHYRDRHNAKGEAIFNFVLVVMFWLIFLLIILSYIKIGKNLLRISKRRSKFPNSGKYATTARNSFIVLIIFTICFVPYHAFRFIYISSQLNVSSCYWKEIIHKTNEIMLVFSSFNSCLDPVMYFLMSSNIRKIMCQLLFRRFQSEASRSESTSEFKPGHSLHDLSVTVKMPQYSTKGN.

Residues 1 to 54 (MTTTSVDSWLCSSHGMHFITNYSDQASQNFSGVPNVTSCPMDEKLLSTVLTTFY) lie on the Extracellular side of the membrane. N-linked (GlcNAc...) asparagine glycosylation is found at Asn21, Asn29, and Asn35. The chain crosses the membrane as a helical span at residues 55–75 (SVIFLVGLVGNIIALYVFLGI). Over 76–81 (HRKRNS) the chain is Cytoplasmic. The chain crosses the membrane as a helical span at residues 82-102 (IQIYLLNVAVADLLLIFCLPF). The Extracellular segment spans residues 103–121 (RIMYHINQNKWTLGVILCK). Cysteines 120 and 197 form a disulfide. A helical membrane pass occupies residues 122–142 (VVGTLFYMNMYISIILLGFIS). Topologically, residues 143–164 (LDRYIKINRSIQQRRAITTKQS) are cytoplasmic. A helical transmembrane segment spans residues 165–185 (IYVCCIVWTVALAGFLTMIIL). At 186–209 (TLKKGGHNSTMCFHYRDRHNAKGE) the chain is on the extracellular side. Residue Asn193 is glycosylated (N-linked (GlcNAc...) asparagine). Residues 210–230 (AIFNFVLVVMFWLIFLLIILS) traverse the membrane as a helical segment. Residues 231-262 (YIKIGKNLLRISKRRSKFPNSGKYATTARNSF) are Cytoplasmic-facing. The chain crosses the membrane as a helical span at residues 263-283 (IVLIIFTICFVPYHAFRFIYI). The Extracellular portion of the chain corresponds to 284–303 (SSQLNVSSCYWKEIIHKTNE). Asn288 carries N-linked (GlcNAc...) asparagine glycosylation. Residues 304 to 324 (IMLVFSSFNSCLDPVMYFLMS) form a helical membrane-spanning segment. Residues 325–375 (SNIRKIMCQLLFRRFQSEASRSESTSEFKPGHSLHDLSVTVKMPQYSTKGN) are Cytoplasmic-facing.

Belongs to the G-protein coupled receptor 1 family. As to expression, highly expressed in glial cells such as astrocytes and microglia.

The protein resides in the cell membrane. Its function is as follows. G-protein-coupled receptor of lysophosphatidylserine (LysoPS) that plays different roles in immune response. Acts a damage-sensing receptor that triggers tissue repair upon recognition of dying neutrophils. Mechanistically, apoptotic neutrophils release lysophosphatydilserine that are recognized by type 3 innate lymphoid cells (ILC3s) via GPR34, which activates downstream PI3K-AKT and RAS-ERK signaling pathways leading to STAT3 activation and IL-22 production. Plays an important role in microglial function, controlling morphology and phagocytosis. The sequence is that of Probable G-protein coupled receptor 34 (Gpr34) from Mus musculus (Mouse).